We begin with the raw amino-acid sequence, 381 residues long: Anhydro-N-acetylmuramic acid kinase (381 aa).

An ATP-binding site is contributed by 22–29 (GTSIDGID).

It belongs to the anhydro-N-acetylmuramic acid kinase family.

The enzyme catalyses 1,6-anhydro-N-acetyl-beta-muramate + ATP + H2O = N-acetyl-D-muramate 6-phosphate + ADP + H(+). It participates in amino-sugar metabolism; 1,6-anhydro-N-acetylmuramate degradation. Its pathway is cell wall biogenesis; peptidoglycan recycling. Functionally, catalyzes the specific phosphorylation of 1,6-anhydro-N-acetylmuramic acid (anhMurNAc) with the simultaneous cleavage of the 1,6-anhydro ring, generating MurNAc-6-P. Is required for the utilization of anhMurNAc either imported from the medium or derived from its own cell wall murein, and thus plays a role in cell wall recycling. The sequence is that of Anhydro-N-acetylmuramic acid kinase from Xylella fastidiosa (strain Temecula1 / ATCC 700964).